Consider the following 84-residue polypeptide: Large ribosomal subunit protein bL27 (84 aa).

Residues 1–21 form a disordered region; it reads MAHKKGGGSTKNGRDSNPKYL.

The protein belongs to the bacterial ribosomal protein bL27 family.

The protein is Large ribosomal subunit protein bL27 of Chlorobium luteolum (strain DSM 273 / BCRC 81028 / 2530) (Pelodictyon luteolum).